The sequence spans 87 residues: Large ribosomal subunit protein bL31B (87 aa).

Belongs to the bacterial ribosomal protein bL31 family. Type B subfamily. In terms of assembly, part of the 50S ribosomal subunit.

This Escherichia coli O8 (strain IAI1) protein is Large ribosomal subunit protein bL31B.